Reading from the N-terminus, the 225-residue chain is NAD(P)H-quinone oxidoreductase subunit K, chloroplastic (225 aa).

Residues Cys43, Cys44, Cys108, and Cys139 each coordinate [4Fe-4S] cluster.

Belongs to the complex I 20 kDa subunit family. As to quaternary structure, NDH is composed of at least 16 different subunits, 5 of which are encoded in the nucleus. The cofactor is [4Fe-4S] cluster.

It localises to the plastid. The protein localises to the chloroplast thylakoid membrane. It catalyses the reaction a plastoquinone + NADH + (n+1) H(+)(in) = a plastoquinol + NAD(+) + n H(+)(out). It carries out the reaction a plastoquinone + NADPH + (n+1) H(+)(in) = a plastoquinol + NADP(+) + n H(+)(out). Its function is as follows. NDH shuttles electrons from NAD(P)H:plastoquinone, via FMN and iron-sulfur (Fe-S) centers, to quinones in the photosynthetic chain and possibly in a chloroplast respiratory chain. The immediate electron acceptor for the enzyme in this species is believed to be plastoquinone. Couples the redox reaction to proton translocation, and thus conserves the redox energy in a proton gradient. The polypeptide is NAD(P)H-quinone oxidoreductase subunit K, chloroplastic (Nuphar advena (Common spatterdock)).